The primary structure comprises 112 residues: MPDYLVVLESAWTIRDADSVDDAISIAISEAGKRLNPTAKFVEVEAGILSCPYCEEELPCTLIVARTALVGVKMEMKVYKADSEEHARRIALSTIGKALRDIPLEIIEVEEL.

Belongs to the UPF0212 family.

The polypeptide is UPF0212 protein Mhun_0078 (Methanospirillum hungatei JF-1 (strain ATCC 27890 / DSM 864 / NBRC 100397 / JF-1)).